Reading from the N-terminus, the 55-residue chain is ATP synthase F(0) complex subunit 8 (55 aa).

The helical transmembrane segment at leucine 4–isoleucine 24 threads the bilayer. A compositionally biased stretch (polar residues) spans threonine 32 to serine 41. Residues threonine 32–glutamine 55 are disordered.

Belongs to the ATPase protein 8 family. As to quaternary structure, component of the ATP synthase complex composed at least of ATP5F1A/subunit alpha, ATP5F1B/subunit beta, ATP5MC1/subunit c (homooctomer), MT-ATP6/subunit a, MT-ATP8/subunit 8, ATP5ME/subunit e, ATP5MF/subunit f, ATP5MG/subunit g, ATP5MK/subunit k, ATP5MJ/subunit j, ATP5F1C/subunit gamma, ATP5F1D/subunit delta, ATP5F1E/subunit epsilon, ATP5PF/subunit F6, ATP5PB/subunit b, ATP5PD/subunit d, ATP5PO/subunit OSCP. ATP synthase complex consists of a soluble F(1) head domain (subunits alpha(3) and beta(3)) - the catalytic core - and a membrane F(0) domain - the membrane proton channel (subunits c, a, 8, e, f, g, k and j). These two domains are linked by a central stalk (subunits gamma, delta, and epsilon) rotating inside the F1 region and a stationary peripheral stalk (subunits F6, b, d, and OSCP).

The protein localises to the mitochondrion membrane. In terms of biological role, subunit 8, of the mitochondrial membrane ATP synthase complex (F(1)F(0) ATP synthase or Complex V) that produces ATP from ADP in the presence of a proton gradient across the membrane which is generated by electron transport complexes of the respiratory chain. ATP synthase complex consist of a soluble F(1) head domain - the catalytic core - and a membrane F(1) domain - the membrane proton channel. These two domains are linked by a central stalk rotating inside the F(1) region and a stationary peripheral stalk. During catalysis, ATP synthesis in the catalytic domain of F(1) is coupled via a rotary mechanism of the central stalk subunits to proton translocation. In vivo, can only synthesize ATP although its ATP hydrolase activity can be activated artificially in vitro. Part of the complex F(0) domain. This Formosania lacustris (Oriental stream loach) protein is ATP synthase F(0) complex subunit 8.